The primary structure comprises 632 residues: MSSQEASKMLRTYNIAWWGNNYYDVNELGHISVCPDPDVPEARVDLAKLVKAREAQGQRLPALFCFPQILQHRLRSINAAFKRARESYGYNGDYFLVYPIKVNQHRRVIESLIHSGEPLGLEAGSKAELMAVLAHAGMTRSVIVCNGYKDREYIRLALIGEKMGHKVYLVIEKMSEIAIVLEEAERLNVVPRLGVRARLASQGSGKWQSSGGEKSKFGLAATQVLQLVETLRDAGRLDSLQLLHFHLGSQMANIRDIATGVRESARFYVELHKLGVNIQCFDVGGGLGVDYEGTRSQSDCSVNYGLNEYANNIIWAIGDACEEHGLPHPTVITESGRAVTAHHTVLVSNIIGVERNEYTDPTAPAEDAPRALQNLWETWQEMHKPGTRRSLREWLHDSQMDLHDIHIGYSSGAFSLQERAWAEQLYLSMCHEVQKQLDPQNRAHRPIIDELQERMADKMYVNFSLFQSMPDAWGIDQLFPVLPLEGLDQVPERRAVLLDITCDSDGAIDHYIDGDGIATTMPMPEYDPENPPMLGFFMVGAYQEILGNMHNLFGDTEAVDVFVFPDGSVEVELSDEGDTVADMLQYVQLDPKTLLTHFRDQVKQTDLDDALQQQFLEEFEAGLYGYTYLEDE.

Lys-101 carries the N6-(pyridoxal phosphate)lysine modification. A substrate-binding site is contributed by 281-291; the sequence is FDVGGGLGVDY.

The protein belongs to the Orn/Lys/Arg decarboxylase class-II family. SpeA subfamily. Requires Mg(2+) as cofactor. The cofactor is pyridoxal 5'-phosphate.

It carries out the reaction L-arginine + H(+) = agmatine + CO2. Its pathway is amine and polyamine biosynthesis; agmatine biosynthesis; agmatine from L-arginine: step 1/1. Functionally, catalyzes the biosynthesis of agmatine from arginine. The polypeptide is Biosynthetic arginine decarboxylase (Salmonella agona (strain SL483)).